The following is a 481-amino-acid chain: Metalloprotease TldD (481 aa).

The protein belongs to the peptidase U62 family.

Metalloprotease involved in CcdA degradation. Suppresses the inhibitory activity of the carbon storage regulator (CsrA). The polypeptide is Metalloprotease TldD (tldD) (Escherichia coli (strain K12)).